Here is a 41-residue protein sequence, read N- to C-terminus: Large ribosomal subunit protein bL36 (41 aa).

This sequence belongs to the bacterial ribosomal protein bL36 family.

This is Large ribosomal subunit protein bL36 from Rickettsia africae (strain ESF-5).